Consider the following 922-residue polypeptide: Band 3 anion transport protein (922 aa).

Disordered stretches follow at residues 1–36 (MEGP…TMSN) and 355–389 (QHPD…LRTR). At 1 to 416 (MEGPGQDTED…LSDIRDALNP (416 aa)) the chain is on the cytoplasmic side. Residues 10-26 (DALRRSLDPEGYEDTKG) show a composition bias toward basic and acidic residues. Residues 27 to 36 (SRTSLGTMSN) are compositionally biased toward polar residues. The chain crosses the membrane as a helical span at residues 417–440 (QCLAAVIFIYFAALSPAITFGGLL). At 441–448 (GEKTRGMM) the chain is on the extracellular side. Residues 449-469 (GVSELLLSTSVQCLLFSLLSA) traverse the membrane as a helical segment. The Cytoplasmic segment spans residues 470 to 472 (QPL). Residues 473–489 (LVVGFSGPLLVFEEAFF) form a discontinuously helical membrane-spanning segment. The Extracellular segment spans residues 490–498 (RFCEDHGLE). A helical transmembrane segment spans residues 499 to 519 (YIVGRVWIGFWLILLVLLVVA). Topologically, residues 520 to 531 (CEGTVLVRYLSR) are cytoplasmic. A helical membrane pass occupies residues 532–554 (YTQEIFSFLISLIFIYETFAKLV). Over 555 to 581 (TIFEAHPLQQSYDTDVSTEPSVPKPNT) the chain is Extracellular. The chain crosses the membrane as a helical span at residues 582–602 (ALLSLVLMAGTFFLALFLRQF). Residues 603–613 (KNSVFLPGKVR) are Cytoplasmic-facing. A helical membrane pass occupies residues 614–634 (RLIGDFGVPISIFVMALADFF). Over 635-674 (IKDTYTQKLKVPRGLEVTNGTARGWFIHPMGSATPFPIWM) the chain is Extracellular. Asn653 carries an N-linked (GlcNAc...) asparagine glycan. Residues 675 to 695 (MFASPVPALLVFILIFLETQI) form a helical membrane-spanning segment. At 696-711 (TTLIVSKPERKLVKGS) the chain is on the cytoplasmic side. Residues 712 to 730 (GFHLDLLLIVAMGGLAALF) form a helical membrane-spanning segment. A discontinuously helical membrane pass occupies residues 731–748 (GMPWLSATTVRTITHANA). The Cytoplasmic segment spans residues 749–771 (LTVVGKSAVPGERAHIVEVKEQR). A run of 2 helical transmembrane segments spans residues 772-792 (LSGL…PILK) and 793-811 (YIPL…VTSL). Over 812-849 (FGIQLFDRILLLLMPPKYHPKEPYVTRVKTWRITSSPL) the chain is Cytoplasmic. The discontinuously helical intramembrane region spans 850–880 (TQILVVALLWGVKVSPASLRCPFVLVLTVPL). Over 881–922 (RRLLLPRIFSEIELKCLDTDDAVVTFEEAEGQDVYNEVQMPS) the chain is Cytoplasmic.

Belongs to the anion exchanger (TC 2.A.31) family. A dimer in solution, it spans the membrane asymmetrically and appears to be tetrameric. In terms of tissue distribution, erythrocytes.

It is found in the cell membrane. Its subcellular location is the basolateral cell membrane. It catalyses the reaction hydrogencarbonate(in) + chloride(out) = hydrogencarbonate(out) + chloride(in). Its function is as follows. Functions both as a transporter that mediates electroneutral anion exchange across the cell membrane and as a structural protein. Major integral membrane glycoprotein of the erythrocyte membrane; required for normal flexibility and stability of the erythrocyte membrane and for normal erythrocyte shape via the interactions of its cytoplasmic domain with cytoskeletal proteins, glycolytic enzymes, and hemoglobin. Functions as a transporter that mediates the 1:1 exchange of inorganic anions across the erythrocyte membrane. Mediates chloride-bicarbonate exchange in the kidney, and is required for normal acidification of the urine. This is Band 3 anion transport protein (SLC4A1) from Gallus gallus (Chicken).